Here is a 110-residue protein sequence, read N- to C-terminus: UPF0060 membrane protein Rpic_4131 (110 aa).

The next 4 membrane-spanning stretches (helical) occupy residues 8 to 28, 33 to 53, 65 to 85, and 88 to 108; these read VLFA…WLVL, PFWL…LLTL, YGGV…GVAL, and WDVG…LQPQ.

This sequence belongs to the UPF0060 family.

It is found in the cell inner membrane. This chain is UPF0060 membrane protein Rpic_4131, found in Ralstonia pickettii (strain 12J).